Reading from the N-terminus, the 72-residue chain is UPF0270 protein YheU (72 aa).

The protein belongs to the UPF0270 family.

In Salmonella choleraesuis (strain SC-B67), this protein is UPF0270 protein YheU.